The following is a 363-amino-acid chain: S-adenosylmethionine decarboxylase proenzyme (363 aa).

Residues Glu-9 and Glu-12 contribute to the active site. The Schiff-base intermediate with substrate; via pyruvic acid role is filled by Ser-69. Ser-69 carries the pyruvic acid (Ser); by autocatalysis modification. Catalysis depends on Cys-83, which acts as the Proton donor; for catalytic activity. Active-site proton acceptor; for processing activity residues include Ser-232 and His-245.

It belongs to the eukaryotic AdoMetDC family. Requires pyruvate as cofactor. Is synthesized initially as an inactive proenzyme. Formation of the active enzyme involves a self-maturation process in which the active site pyruvoyl group is generated from an internal serine residue via an autocatalytic post-translational modification. Two non-identical subunits are generated from the proenzyme in this reaction, and the pyruvate is formed at the N-terminus of the alpha chain, which is derived from the carboxyl end of the proenzyme. The post-translation cleavage follows an unusual pathway, termed non-hydrolytic serinolysis, in which the side chain hydroxyl group of the serine supplies its oxygen atom to form the C-terminus of the beta chain, while the remainder of the serine residue undergoes an oxidative deamination to produce ammonia and the pyruvoyl group blocking the N-terminus of the alpha chain.

It carries out the reaction S-adenosyl-L-methionine + H(+) = S-adenosyl 3-(methylsulfanyl)propylamine + CO2. The protein operates within amine and polyamine biosynthesis; S-adenosylmethioninamine biosynthesis; S-adenosylmethioninamine from S-adenosyl-L-methionine: step 1/1. This is S-adenosylmethionine decarboxylase proenzyme (SAMDC) from Spinacia oleracea (Spinach).